The chain runs to 459 residues: tRNA modification GTPase MnmE (459 aa).

Residues R21, E84, and K123 each coordinate (6S)-5-formyl-5,6,7,8-tetrahydrofolate. Residues 219–380 (GMLTVIVGQP…LEKEIKQRVY (162 aa)) enclose the TrmE-type G domain. Position 229 (N229) interacts with K(+). Residues 229–234 (NVGKSS), 248–254 (TDIPGTT), and 273–276 (DTAG) each bind GTP. Mg(2+) is bound at residue S233. K(+) is bound by residues T248, I250, and T253. Mg(2+) is bound at residue T254. K459 serves as a coordination point for (6S)-5-formyl-5,6,7,8-tetrahydrofolate.

The protein belongs to the TRAFAC class TrmE-Era-EngA-EngB-Septin-like GTPase superfamily. TrmE GTPase family. In terms of assembly, homodimer. Heterotetramer of two MnmE and two MnmG subunits. Requires K(+) as cofactor.

It localises to the cytoplasm. Exhibits a very high intrinsic GTPase hydrolysis rate. Involved in the addition of a carboxymethylaminomethyl (cmnm) group at the wobble position (U34) of certain tRNAs, forming tRNA-cmnm(5)s(2)U34. The polypeptide is tRNA modification GTPase MnmE (Desulfitobacterium hafniense (strain Y51)).